The chain runs to 366 residues: Sigma54-dependent transcriptional activator SfnR (366 aa).

Residues Q21 to L250 enclose the Sigma-54 factor interaction domain. ATP-binding positions include G49–E56 and A112–E121.

In terms of biological role, involved in the dimethyl sulfide degradation pathway. Activates the expression of sfnG and sfnF. In Pseudomonas putida (Arthrobacter siderocapsulatus), this protein is Sigma54-dependent transcriptional activator SfnR.